Reading from the N-terminus, the 101-residue chain is NAD(P)H-quinone oxidoreductase subunit 4L, chloroplastic (101 aa).

3 helical membrane passes run 2–22, 32–52, and 61–81; these read ILEH…YGLI, MCLE…SDFF, and IFCI…LAIV.

Belongs to the complex I subunit 4L family. As to quaternary structure, NDH is composed of at least 16 different subunits, 5 of which are encoded in the nucleus.

Its subcellular location is the plastid. The protein resides in the chloroplast thylakoid membrane. The enzyme catalyses a plastoquinone + NADH + (n+1) H(+)(in) = a plastoquinol + NAD(+) + n H(+)(out). It catalyses the reaction a plastoquinone + NADPH + (n+1) H(+)(in) = a plastoquinol + NADP(+) + n H(+)(out). In terms of biological role, NDH shuttles electrons from NAD(P)H:plastoquinone, via FMN and iron-sulfur (Fe-S) centers, to quinones in the photosynthetic chain and possibly in a chloroplast respiratory chain. The immediate electron acceptor for the enzyme in this species is believed to be plastoquinone. Couples the redox reaction to proton translocation, and thus conserves the redox energy in a proton gradient. This is NAD(P)H-quinone oxidoreductase subunit 4L, chloroplastic from Lepidium virginicum (Virginia pepperweed).